The following is a 290-amino-acid chain: Eukaryotic translation initiation factor 3 subunit G (290 aa).

Over residues 1-12 (MADSKQSNRDWA) the composition is skewed to basic and acidic residues. 2 disordered regions span residues 1-30 (MADSKQSNRDWAADDVDADELPPTTESTDA) and 173-192 (AGETGGKYVPPSQRAGATGA). Positions 204-285 (PTLRVTSLSI…LILEVAWSQP (82 aa)) constitute an RRM domain.

It belongs to the eIF-3 subunit G family. In terms of assembly, component of the eukaryotic translation initiation factor 3 (eIF-3) complex.

It is found in the cytoplasm. RNA-binding component of the eukaryotic translation initiation factor 3 (eIF-3) complex, which is involved in protein synthesis of a specialized repertoire of mRNAs and, together with other initiation factors, stimulates binding of mRNA and methionyl-tRNAi to the 40S ribosome. The eIF-3 complex specifically targets and initiates translation of a subset of mRNAs involved in cell proliferation. This subunit can bind 18S rRNA. The protein is Eukaryotic translation initiation factor 3 subunit G of Cryptococcus neoformans var. neoformans serotype D (strain B-3501A) (Filobasidiella neoformans).